We begin with the raw amino-acid sequence, 302 residues long: 4-hydroxy-tetrahydrodipicolinate synthase (302 aa).

Pyruvate is bound at residue Thr57. Residue Tyr145 is the Proton donor/acceptor of the active site. The Schiff-base intermediate with substrate role is filled by Lys173. Ile213 contacts pyruvate.

It belongs to the DapA family. Homotetramer; dimer of dimers.

Its subcellular location is the cytoplasm. The catalysed reaction is L-aspartate 4-semialdehyde + pyruvate = (2S,4S)-4-hydroxy-2,3,4,5-tetrahydrodipicolinate + H2O + H(+). It participates in amino-acid biosynthesis; L-lysine biosynthesis via DAP pathway; (S)-tetrahydrodipicolinate from L-aspartate: step 3/4. Functionally, catalyzes the condensation of (S)-aspartate-beta-semialdehyde [(S)-ASA] and pyruvate to 4-hydroxy-tetrahydrodipicolinate (HTPA). This Corynebacterium aurimucosum (strain ATCC 700975 / DSM 44827 / CIP 107346 / CN-1) (Corynebacterium nigricans) protein is 4-hydroxy-tetrahydrodipicolinate synthase.